We begin with the raw amino-acid sequence, 89 residues long: DNA-directed RNA polymerase subunit omega (89 aa).

It belongs to the RNA polymerase subunit omega family. The RNAP catalytic core consists of 2 alpha, 1 beta, 1 beta' and 1 omega subunit. When a sigma factor is associated with the core the holoenzyme is formed, which can initiate transcription.

The catalysed reaction is RNA(n) + a ribonucleoside 5'-triphosphate = RNA(n+1) + diphosphate. Its function is as follows. Promotes RNA polymerase assembly. Latches the N- and C-terminal regions of the beta' subunit thereby facilitating its interaction with the beta and alpha subunits. The sequence is that of DNA-directed RNA polymerase subunit omega (rpoZ) from Pasteurella multocida (strain Pm70).